We begin with the raw amino-acid sequence, 172 residues long: MDRTAKADLVSTLNGVFTTNAVVVVAHYKGLTVADMQKLRSQMKQAGATVKVAKNRLASIALDGTDVASIKPLLKGPTLLAYSSDPVAAAKVAVDFAKTNDKLVILGGAMGTTALNPDGVKALATLPSLDELRAKLVGLIQAPATKVAQVVNAPAAKLARVFGAYAKKDEAA.

Belongs to the universal ribosomal protein uL10 family. In terms of assembly, part of the ribosomal stalk of the 50S ribosomal subunit. The N-terminus interacts with L11 and the large rRNA to form the base of the stalk. The C-terminus forms an elongated spine to which L12 dimers bind in a sequential fashion forming a multimeric L10(L12)X complex.

Functionally, forms part of the ribosomal stalk, playing a central role in the interaction of the ribosome with GTP-bound translation factors. The polypeptide is Large ribosomal subunit protein uL10 (Methylorubrum populi (strain ATCC BAA-705 / NCIMB 13946 / BJ001) (Methylobacterium populi)).